The chain runs to 8545 residues: Nuclear anchorage protein 1 (8545 aa).

The actin-binding stretch occupies residues 1 to 325 (MSSSPPARPC…VITYVSQFVR (325 aa)). Over 1 to 8494 (MSSSPPARPC…QRSRWRRVLR (8494 aa)) the chain is Cytoplasmic. The Calponin-homology (CH) 1 domain maps to 23 to 130 (KAQKNTFTRW…LIWQIILHFQ (108 aa)). The segment at 148-197 (TEEPTSSAQPEVVVTAPSPTPSSKKSHSKVSSLSGSKTSLASGEKAPSSP) is disordered. Over residues 159-190 (VVVTAPSPTPSSKKSHSKVSSLSGSKTSLASG) the composition is skewed to low complexity. A Calponin-homology (CH) 2 domain is found at 222–328 (QSVEQVFLRW…YVSQFVRMFG (107 aa)). Coiled-coil stretches lie at residues 754–774 (NIRDKLIELERLNEIYDNHSR), 1072–1101 (SFFQLEFDRLNEKLNMLIHDKDKLRELMVH), 1215–1236 (ADILRMKDEKKRDEKTIDEIQA), 1324–1384 (DTKK…QFED), 1574–1629 (RSIE…DLVK), 1725–1754 (ENRNDLEEVKRLAAEIDRAIDTASSMYEDA), 1950–1981 (PAIIESLDKIKDQINNARDNINRQIDNLNYNQ), 2103–2580 (DNIE…KKSD), 2682–2712 (SVKETLDKLKQAKEEDDKLAGVYDELEKIAK), 2852–2949 (IMQE…NIGK), 3002–3119 (DQIV…KTVV), 3178–3295 (DDEK…DEFK), 3346–3417 (QLQH…PEND), 3482–3552 (DELI…EKSL), 3587–3703 (KAEE…ELLD), 3781–3839 (ALKA…KEQL), 3902–4022 (AAHD…KTVV), 4114–4198 (LDVA…DEFK), and 4249–4320 (QLQH…PEND). Residues 3010–3019 (EAEDVTAKES) are compositionally biased toward basic and acidic residues. The interval 3010–3033 (EAEDVTAKESAKKKKKDKKKSPQE) is disordered. Repeat copies occupy residues 3241-4143 (QVAK…KIDP), 4144-5097 (QVAK…KIDP), 5098-6000 (QVAK…KIDP), 6001-6903 (QVAK…KIDP), 6904-7806 (QVAK…KIDP), and 7807-8199 (QVAK…EERA). The 6 X tandem repeat stretch occupies residues 3241–8199 (QVAKDIKDSK…TLIPDLEERA (4959 aa)). The span at 3913-3922 (EAEDVTAKES) shows a compositional bias: basic and acidic residues. The disordered stretch occupies residues 3913–3936 (EAEDVTAKESAKKKKKDKKKSPQE). Basic and acidic residues predominate over residues 4372–4393 (ITREDGGDDNKSPDELIDDRGR). Residues 4372–4395 (ITREDGGDDNKSPDELIDDRGRST) form a disordered region. Coiled-coil stretches lie at residues 4436 to 4506 (DELI…EKSL), 4541 to 4657 (KAEE…ELLD), 4735 to 4793 (ALKA…KEQL), 4856 to 4976 (AAHD…KTVV), 5035 to 5152 (DDEK…DEFK), 5203 to 5274 (QLQH…PEND), 5339 to 5409 (DELI…EKSL), 5444 to 5560 (KAEE…ELLD), 5638 to 5696 (ALKA…KEQL), 5759 to 5879 (AAHD…KTVV), 5938 to 6055 (DDEK…DEFK), 6106 to 6177 (QLQH…PEND), 6242 to 6312 (DELI…EKSL), 6347 to 6463 (KAEE…ELLD), 6541 to 6599 (ALKA…KEQL), 6662 to 6782 (AAHD…KTVV), 6841 to 6958 (DDEK…DEFK), 7009 to 7080 (QLQH…PEND), 7145 to 7215 (DELI…EKSL), 7250 to 7366 (KAEE…ELLD), 7444 to 7502 (ALKA…KEQL), 7565 to 7685 (AAHD…KTVV), 7744 to 7861 (DDEK…DEFK), 7912 to 7983 (QLQH…PEND), 8048 to 8118 (DELI…EKSL), 8153 to 8204 (KAEE…IWER), 8273 to 8329 (VAED…DINN), and 8370 to 8390 (STSIDLDQLLAEAKRLLKEIE). Over residues 4867–4876 (EAEDVTAKES) the composition is skewed to basic and acidic residues. The segment at 4867 to 4890 (EAEDVTAKESAKKKKKDKKKSPQE) is disordered. Residues 5770–5779 (EAEDVTAKES) show a composition bias toward basic and acidic residues. A disordered region spans residues 5770-5793 (EAEDVTAKESAKKKKKDKKKSPQE). The span at 6673-6682 (EAEDVTAKES) shows a compositional bias: basic and acidic residues. Positions 6673-6696 (EAEDVTAKESAKKKKKDKKKSPQE) are disordered. The segment covering 7576-7585 (EAEDVTAKES) has biased composition (basic and acidic residues). Residues 7576-7599 (EAEDVTAKESAKKKKKDKKKSPQE) are disordered. Disordered regions lie at residues 8391–8418 (PRLQLAQPDHDNEDDEDEEKGSDEKPYD) and 8449–8480 (SDSESRSEFDSLDSRSDGLLSPIPDDSTLSEE). Residues 8401–8411 (DNEDDEDEEKG) are compositionally biased toward acidic residues. Residues 8451–8464 (SESRSEFDSLDSRS) show a composition bias toward basic and acidic residues. Residues 8486–8545 (RSRWRRVLRTALPLQALLVLLMGAACLVPHCDDEYCCQLLNNFAKSFDPSLEFVNGPPPF) form the KASH domain. The chain crosses the membrane as a helical; Anchor for type IV membrane protein span at residues 8495 to 8513 (TALPLQALLVLLMGAACLV). At 8514 to 8545 (PHCDDEYCCQLLNNFAKSFDPSLEFVNGPPPF) the chain is on the perinuclear space side.

Belongs to the nesprin family. As to quaternary structure, interacts with F-actin via its N-terminal domain. Most likely interacts with unc-84; the interaction is probably required to recruit anc-1 to the nuclear envelope. In terms of tissue distribution, ubiquitously expressed in all postembryonic cells.

Its subcellular location is the nucleus outer membrane. It is found in the cytoplasm. The protein resides in the cytoskeleton. Functionally, plays a central role in nuclear and mitochondrial anchoring. Probably connects nuclei to the cytoskeleton by interacting with unc-84 at the nuclear envelope and with F-actin in the cytoplasm, creating a bridge across the nuclear envelope between the cytoskeleton and the nucleus. Has a role in positioning of the cell body of the PVQ lumbar interneuron. This chain is Nuclear anchorage protein 1, found in Caenorhabditis elegans.